A 1112-amino-acid chain; its full sequence is Patronin (microtubule-binding protein) homolog (1112 aa).

Positions 165 to 286 constitute a Calponin-homology (CH) domain; that stretch reads IDSVDALLFW…VNAFLADLFV (122 aa). 4 disordered regions span residues 324–358, 485–504, 542–566, and 788–834; these read AARS…SRMS, EGED…QPSV, MQQQ…PSQL, and NHSE…GSGE. 2 stretches are compositionally biased toward polar residues: residues 345–358 and 489–504; these read SHSQ…SRMS and GTQS…QPSV. Residues 542-557 show a composition bias toward low complexity; it reads MQQQMQQQQQQQAQAQ. Residues 802 to 816 show a composition bias toward basic and acidic residues; the sequence is QNDRDDLSTGRKSDD. Residues 850 to 914 are a coiled coil; that stretch reads ALIAKTMKRK…YKRKKLEKEL (65 aa). The interval 916–965 is disordered; that stretch reads AELSARSTGRGHSQPPFIRTKSQMSEVTESSRQNTPRMRGQSSVEQRVSV. A compositionally biased stretch (polar residues) spans 935–951; sequence TKSQMSEVTESSRQNTP. A compositionally biased stretch (low complexity) spans 956-965; sequence QSSVEQRVSV. Positions 972-1109 constitute a CKK domain; it reads THKLYAKTVT…RIPHSGTPAH (138 aa).

It belongs to the CAMSAP1 family. Interacts with dapk-1. Expressed in larval and adult epidermis, intestine and pharynx. Broadly expressed in the nervous system. Expressed in body wall muscle cells.

The protein localises to the cell projection. It localises to the axon. Its subcellular location is the dendrite. The protein resides in the cell membrane. It is found in the sarcolemma. The protein localises to the cytoplasm. It localises to the cytosol. Its subcellular location is the cytoskeleton. The protein resides in the perikaryon. In terms of biological role, required for microtubule stability and anchorage by binding to the minus ends of microtubules. Acts redundantly with noca-1 to control circumferential microtubule assembly along the body which is necessary for larval development, viability, morphology and integrity of the epidermis. Promotes microtubule stability and polymerization in neurons. Involved in the maintenance of neurite morphology in ALM and PLM neurons. May play a role in synaptic protein localization in the PLM neuron. May act upstream of dlk-1 in neuronal regeneration. Plays a role in postembryonic epidermal tissue integrity and wound healing. This Caenorhabditis elegans protein is Patronin (microtubule-binding protein) homolog.